We begin with the raw amino-acid sequence, 103 residues long: Histone H4 (103 aa).

Gly residues predominate over residues 1 to 14; that stretch reads MSGRGKGGKGLGKG. A disordered region spans residues 1–20; sequence MSGRGKGGKGLGKGGAKRHR. A DNA-binding region spans residues 17–21; it reads KRHRK.

Belongs to the histone H4 family. In terms of assembly, the nucleosome is a histone octamer containing two molecules each of H2A, H2B, H3 and H4 assembled in one H3-H4 heterotetramer and two H2A-H2B heterodimers. The octamer wraps approximately 147 bp of DNA.

It is found in the nucleus. It localises to the chromosome. In terms of biological role, core component of nucleosome. Nucleosomes wrap and compact DNA into chromatin, limiting DNA accessibility to the cellular machineries which require DNA as a template. Histones thereby play a central role in transcription regulation, DNA repair, DNA replication and chromosomal stability. DNA accessibility is regulated via a complex set of post-translational modifications of histones, also called histone code, and nucleosome remodeling. The sequence is that of Histone H4 (H41) from Physarum polycephalum (Slime mold).